We begin with the raw amino-acid sequence, 437 residues long: Adenylosuccinate synthetase (437 aa).

GTP-binding positions include 12 to 18 (GDEGKGK) and 40 to 42 (GHT). The active-site Proton acceptor is Asp13. The Mg(2+) site is built by Asp13 and Gly40. Residues 13-16 (DEGK), 38-41 (NAGH), Thr128, Arg142, Gln223, Thr238, and Arg302 contribute to the IMP site. His41 acts as the Proton donor in catalysis. Residue 298-304 (TTTGRRR) participates in substrate binding. Residues Arg304, 330–332 (KLD), and 412–414 (SLG) each bind GTP.

The protein belongs to the adenylosuccinate synthetase family. Homodimer. Requires Mg(2+) as cofactor.

It is found in the cytoplasm. It catalyses the reaction IMP + L-aspartate + GTP = N(6)-(1,2-dicarboxyethyl)-AMP + GDP + phosphate + 2 H(+). It participates in purine metabolism; AMP biosynthesis via de novo pathway; AMP from IMP: step 1/2. Plays an important role in the de novo pathway of purine nucleotide biosynthesis. Catalyzes the first committed step in the biosynthesis of AMP from IMP. This chain is Adenylosuccinate synthetase, found in Synechococcus sp. (strain RCC307).